The primary structure comprises 337 residues: MDLDQIVADAQQSFEGAADITTLENEKARFLGKSGALTELLKGLGKLDPETRKTEGARINVAKQQVEAALNARRQALADALLNQRLAAEAIDVTLPGRGAGAGSLHPVMRTWERVEQIFRSIGFDVADGPEIETDWYNFTALNSPENHPARSMQDTFYVDGKDADGRPLLLRTHTSPMQVRYARMNRPPIKVIAPGRTYRVDSDATHSPMFNQVEGLWIDENVSFADLKGAYTDFLKKFFERDDILVRFRPSYFPFTEPSAEIDMMFEHGKNAGKWLEISGSGQVHPTVIRNMGLDPERYIGFAFGSGLERLTMLRYGVQDLRLFFENDLRFLRQFA.

Glutamate 258 is a binding site for Mg(2+).

Belongs to the class-II aminoacyl-tRNA synthetase family. Phe-tRNA synthetase alpha subunit type 1 subfamily. As to quaternary structure, tetramer of two alpha and two beta subunits. The cofactor is Mg(2+).

The protein localises to the cytoplasm. The catalysed reaction is tRNA(Phe) + L-phenylalanine + ATP = L-phenylalanyl-tRNA(Phe) + AMP + diphosphate + H(+). The protein is Phenylalanine--tRNA ligase alpha subunit of Burkholderia mallei (strain ATCC 23344).